The following is a 280-amino-acid chain: Bifunctional protein FolD (280 aa).

NADP(+)-binding positions include 164–166 (GRS), Ser-189, and Val-230.

The protein belongs to the tetrahydrofolate dehydrogenase/cyclohydrolase family. Homodimer.

It carries out the reaction (6R)-5,10-methylene-5,6,7,8-tetrahydrofolate + NADP(+) = (6R)-5,10-methenyltetrahydrofolate + NADPH. The enzyme catalyses (6R)-5,10-methenyltetrahydrofolate + H2O = (6R)-10-formyltetrahydrofolate + H(+). It participates in one-carbon metabolism; tetrahydrofolate interconversion. Its function is as follows. Catalyzes the oxidation of 5,10-methylenetetrahydrofolate to 5,10-methenyltetrahydrofolate and then the hydrolysis of 5,10-methenyltetrahydrofolate to 10-formyltetrahydrofolate. The protein is Bifunctional protein FolD of Geotalea uraniireducens (strain Rf4) (Geobacter uraniireducens).